Reading from the N-terminus, the 315-residue chain is Putative serine/threonine-protein phosphatase PP2A-4 catalytic subunit (315 aa).

Residues Asp63, His65, Asp91, and Asn123 each contribute to the Mn(2+) site. His124 functions as the Proton donor in the catalytic mechanism. Mn(2+) contacts are provided by His173 and His247.

Belongs to the PPP phosphatase family. PP-2A subfamily. It depends on Mn(2+) as a cofactor.

It localises to the cytoplasm. It catalyses the reaction O-phospho-L-seryl-[protein] + H2O = L-seryl-[protein] + phosphate. It carries out the reaction O-phospho-L-threonyl-[protein] + H2O = L-threonyl-[protein] + phosphate. This Oryza sativa subsp. indica (Rice) protein is Putative serine/threonine-protein phosphatase PP2A-4 catalytic subunit (PP2A4).